The primary structure comprises 864 residues: Protein 4.1 (864 aa).

Composition is skewed to polar residues over residues 1-16 (MTTE…NSQH) and 27-41 (NSGQ…SCQT). 3 disordered regions span residues 1 to 122 (MTTE…GTSL), 136 to 170 (EPEL…DFEI), and 182 to 202 (IEVK…ASQK). A Phosphoserine modification is found at serine 14. Position 60 is a phosphothreonine; by CDK1 (threonine 60). Positions 61–75 (PTHEDLTKNKERTSE) are enriched in basic and acidic residues. A compositionally biased stretch (low complexity) spans 76–87 (SRGLSRLFSSFL). Serine 84, serine 85, serine 95, serine 104, serine 121, serine 149, serine 151, serine 152, serine 188, and serine 191 each carry phosphoserine. A compositionally biased stretch (basic and acidic residues) spans 101–117 (EVESDKEKGEGGQKEIE). The segment covering 149 to 158 (SLSSAETQPA) has biased composition (polar residues). A compositionally biased stretch (basic and acidic residues) spans 182-199 (IEVKEESPQSKAETELKA). One can recognise an FERM domain in the interval 210–491 (MHCKVSLLDD…EHHTFFRLTS (282 aa)). Tyrosine 222 bears the Phosphotyrosine mark. Threonine 378 is subject to Phosphothreonine. Positions 494–614 (TIPKSKFLAL…QAEPEPTEAW (121 aa)) are hydrophilic. Disordered stretches follow at residues 518–572 (RQAS…VAEG) and 586–611 (KAQK…PEPT). Residues serine 521, serine 540, serine 542, and serine 555 each carry the phosphoserine modification. Basic and acidic residues predominate over residues 587 to 600 (AQKETVKAEVKKED). A compositionally biased stretch (acidic residues) spans 601-610 (EPPEQAEPEP). The interval 615–713 (KVEKTHIEVT…WDKRLSTHSP (99 aa)) is spectrin--actin-binding. Tyrosine 660 carries the phosphotyrosine; by EGFR modification. Phosphoserine is present on residues serine 664, serine 674, serine 684, and serine 709. Serine 712 bears the Phosphoserine; by CDK1 mark. The segment at 714-864 (FRTLNINGQI…VHQETEIADE (151 aa)) is C-terminal (CTD). A phosphothreonine mark is found at threonine 736 and threonine 859.

Binds with a high affinity to glycophorin and with lower affinity to band III protein. Associates with the nuclear mitotic apparatus. Interacts with calmodulin. Interacts with CPAP. Interacts with DLG1. Also found to associate with contractile apparatus and tight junctions. Interacts with NUMA1; this interaction is negatively regulated by CDK1 during metaphase and promotes anaphase-specific localization of NUMA1 in symmetrically dividing cells. Interacts with ATP2B1; regulates small intestinal calcium absorption through regulation of membrane expression of ATP2B1. Post-translationally, phosphorylated at multiple sites by different protein kinases and each phosphorylation event selectively modulates the protein's functions. Phosphorylation on Tyr-660 reduces the ability of 4.1 to promote the assembly of the spectrin/actin/4.1 ternary complex. In terms of processing, O-glycosylated; contains N-acetylglucosamine side chains in the C-terminal domain.

It is found in the cytoplasm. The protein resides in the cytoskeleton. The protein localises to the cell cortex. It localises to the nucleus. Functionally, protein 4.1 is a major structural element of the erythrocyte membrane skeleton. It plays a key role in regulating membrane physical properties of mechanical stability and deformability by stabilizing spectrin-actin interaction. Recruits DLG1 to membranes. Required for dynein-dynactin complex and NUMA1 recruitment at the mitotic cell cortex during anaphase. This is Protein 4.1 from Homo sapiens (Human).